The primary structure comprises 716 residues: MIYQSPTIQVELLEDNIARLCFNASGSVNKLDRETINSLDAALDAIQQDSHIQALVLTSAKGAFIVGADITEFLGLFAQEDSVLLPWIAEANVVFNKLEDLPFPTISAINGFALGGGFETVLATDFRIADTTAKIGLPETKLGLIPGFGGTVRLPRLIGTDNALEWITSGKDQRPEAALKVGAIDAVVAPENLQASAIKMLKDALAEKLDWQSRRARKQAALTLPKLEAMMSFATAKGMVFKIAGKHYPAPMAAISVIEQAARCGRADALKVEHQAFVKLAKTDVAQALIGIFLNDQLVKGKAKKAGKLAKNIDTAAVLGAGIMGGGIAYQSASKGTPIIMKDIAQPALELGLGEASKLLAAQIKRGRSTPQKMAKVLNNITATLDYTPVKDVDVVVEAVVEHPKVKSMVLAEVEQNVSDDAIITSNTSTISINLLAKSLKKPERFCGMHFFNPVHKMPLVEVIRGENSSEETIASVVAYASKMGKTPIVVNDCPGFFVNRVLFPYFAGFSGLLADGADFAAIDKVMEKQFGWPMGPAYLLDVVGIDTGHHAQAVMAEGFPDRMGKNGKDAIDIMFEAERFGQKNSKGFYAYSVDRRGKPKKDVDPTSYELLGAEFGELKAFESEDIIARTMIPMIIETVRCLEEGIIATPAEADMGLVFGLGFPPFRGGVFRYIDTMGVANFVALADKYAHLGGLYQVTDAMRELAANNGSYYQS.

Residues 1–189 (MIYQSPTIQV…KVGAIDAVVA (189 aa)) are enoyl-CoA hydratase/isomerase. Substrate is bound at residue D296. Positions 311–716 (KNIDTAAVLG…AANNGSYYQS (406 aa)) are 3-hydroxyacyl-CoA dehydrogenase. NAD(+) is bound by residues M324, D343, 400–402 (VVE), K407, and S429. H450 (for 3-hydroxyacyl-CoA dehydrogenase activity) is an active-site residue. N453 provides a ligand contact to NAD(+). N500 contributes to the substrate binding site.

In the N-terminal section; belongs to the enoyl-CoA hydratase/isomerase family. It in the C-terminal section; belongs to the 3-hydroxyacyl-CoA dehydrogenase family. As to quaternary structure, heterotetramer of two alpha chains (FadB) and two beta chains (FadA).

The catalysed reaction is a (3S)-3-hydroxyacyl-CoA + NAD(+) = a 3-oxoacyl-CoA + NADH + H(+). The enzyme catalyses a (3S)-3-hydroxyacyl-CoA = a (2E)-enoyl-CoA + H2O. It carries out the reaction a 4-saturated-(3S)-3-hydroxyacyl-CoA = a (3E)-enoyl-CoA + H2O. It catalyses the reaction (3S)-3-hydroxybutanoyl-CoA = (3R)-3-hydroxybutanoyl-CoA. The catalysed reaction is a (3Z)-enoyl-CoA = a 4-saturated (2E)-enoyl-CoA. The enzyme catalyses a (3E)-enoyl-CoA = a 4-saturated (2E)-enoyl-CoA. The protein operates within lipid metabolism; fatty acid beta-oxidation. In terms of biological role, involved in the aerobic and anaerobic degradation of long-chain fatty acids via beta-oxidation cycle. Catalyzes the formation of 3-oxoacyl-CoA from enoyl-CoA via L-3-hydroxyacyl-CoA. It can also use D-3-hydroxyacyl-CoA and cis-3-enoyl-CoA as substrate. This Shewanella sediminis (strain HAW-EB3) protein is Fatty acid oxidation complex subunit alpha.